Reading from the N-terminus, the 565-residue chain is Proline--tRNA ligase (565 aa).

Belongs to the class-II aminoacyl-tRNA synthetase family. ProS type 1 subfamily. Homodimer.

Its subcellular location is the cytoplasm. The enzyme catalyses tRNA(Pro) + L-proline + ATP = L-prolyl-tRNA(Pro) + AMP + diphosphate. Its function is as follows. Catalyzes the attachment of proline to tRNA(Pro) in a two-step reaction: proline is first activated by ATP to form Pro-AMP and then transferred to the acceptor end of tRNA(Pro). As ProRS can inadvertently accommodate and process non-cognate amino acids such as alanine and cysteine, to avoid such errors it has two additional distinct editing activities against alanine. One activity is designated as 'pretransfer' editing and involves the tRNA(Pro)-independent hydrolysis of activated Ala-AMP. The other activity is designated 'posttransfer' editing and involves deacylation of mischarged Ala-tRNA(Pro). The misacylated Cys-tRNA(Pro) is not edited by ProRS. This Lactobacillus delbrueckii subsp. bulgaricus (strain ATCC 11842 / DSM 20081 / BCRC 10696 / JCM 1002 / NBRC 13953 / NCIMB 11778 / NCTC 12712 / WDCM 00102 / Lb 14) protein is Proline--tRNA ligase.